The chain runs to 330 residues: Flotillin-like protein FloA (330 aa).

The next 2 helical transmembrane spans lie at 6-26 and 28-48; these read LLLFVIIAAGLIVLSIFFTFV and VMLWISALAAGVRVSIFTLVG.

Belongs to the flotillin-like FloA family. In terms of assembly, homooligomerizes.

The protein resides in the cell membrane. Its subcellular location is the membrane raft. In terms of biological role, found in functional membrane microdomains (FMM) that may be equivalent to eukaryotic membrane rafts. FMMs are highly dynamic and increase in number as cells age. Flotillins are thought to be important factors in membrane fluidity. This chain is Flotillin-like protein FloA, found in Bacillus pumilus (strain SAFR-032).